Reading from the N-terminus, the 454-residue chain is Aquaglyceroporin-9 (454 aa).

The Cytoplasmic segment spans residues 1-186 (MEGGLRSPLN…RHTMREPFSE (186 aa)). Residues 187-207 (FFGVFILILFGDGVVAQVVLS) form a helical membrane-spanning segment. The Extracellular portion of the chain corresponds to 208–216 (SGERGSYQS). A helical membrane pass occupies residues 217-237 (ISWGWGIGVMLGVYASGVSGA). Residues 238-257 (HINPAVTFANCIFRKFPWRK) lie on the Cytoplasmic side of the membrane. The NPA 1 signature appears at 240 to 242 (NPA). The helical transmembrane segment at 258–278 (FPIYMLAQVLGAMCASGVVYA) threads the bilayer. Residues 279-316 (NYKSAIDMFEGGNNIRTVGLNTSSAGIFCTYPAPFMTK) lie on the Extracellular side of the membrane. N299 carries N-linked (GlcNAc...) asparagine glycosylation. A helical transmembrane segment spans residues 317–337 (TGQFFSEFVASTILMFCIYAL). Residues 338-351 (QDNGNLGSGNLTPL) lie on the Cytoplasmic side of the membrane. A helical membrane pass occupies residues 352 to 372 (GLFFVIFGIGACFGWETGYAI). The short motif at 373–375 (NLA) is the NPA 2 element. Topologically, residues 373–403 (NLARDFGPRLMSYFLGYGHEVWSAGNYYFWV) are extracellular. A helical membrane pass occupies residues 404–424 (PMVAPFIGCLFGGWLYDVFIF). At 425–454 (TGESPINTPWMGLKRLMPGGLGSKKVDSKV) the chain is on the cytoplasmic side.

It belongs to the MIP/aquaporin (TC 1.A.8) family.

The protein localises to the membrane. It catalyses the reaction H2O(in) = H2O(out). The enzyme catalyses glycerol(in) = glycerol(out). Water channel required to facilitate the transport of water across membranes. May play a role in the vegetative growth and pathogenicity. The polypeptide is Aquaglyceroporin-9 (Botryotinia fuckeliana (strain B05.10) (Noble rot fungus)).